Consider the following 670-residue polypeptide: DNA ligase (670 aa).

Residues 32 to 36 (DSEYD), 81 to 82 (SL), and Glu114 each bind NAD(+). The active-site N6-AMP-lysine intermediate is Lys116. Residues Arg137, Glu174, Lys291, and Lys315 each contribute to the NAD(+) site. 4 residues coordinate Zn(2+): Cys409, Cys412, Cys427, and Cys433. Residues 592 to 670 (ASENLFKDKT…EEEFLAQITR (79 aa)) form the BRCT domain.

Belongs to the NAD-dependent DNA ligase family. LigA subfamily. It depends on Mg(2+) as a cofactor. Requires Mn(2+) as cofactor.

The enzyme catalyses NAD(+) + (deoxyribonucleotide)n-3'-hydroxyl + 5'-phospho-(deoxyribonucleotide)m = (deoxyribonucleotide)n+m + AMP + beta-nicotinamide D-nucleotide.. Functionally, DNA ligase that catalyzes the formation of phosphodiester linkages between 5'-phosphoryl and 3'-hydroxyl groups in double-stranded DNA using NAD as a coenzyme and as the energy source for the reaction. It is essential for DNA replication and repair of damaged DNA. The polypeptide is DNA ligase (Haemophilus influenzae (strain PittEE)).